A 101-amino-acid polypeptide reads, in one-letter code: Urease subunit beta (101 aa).

The protein belongs to the urease beta subunit family. In terms of assembly, heterotrimer of UreA (gamma), UreB (beta) and UreC (alpha) subunits. Three heterotrimers associate to form the active enzyme.

The protein localises to the cytoplasm. The catalysed reaction is urea + 2 H2O + H(+) = hydrogencarbonate + 2 NH4(+). It participates in nitrogen metabolism; urea degradation; CO(2) and NH(3) from urea (urease route): step 1/1. This is Urease subunit beta from Thermosynechococcus vestitus (strain NIES-2133 / IAM M-273 / BP-1).